The sequence spans 102 residues: Putative pterin-4-alpha-carbinolamine dehydratase (102 aa).

This sequence belongs to the pterin-4-alpha-carbinolamine dehydratase family.

It carries out the reaction (4aS,6R)-4a-hydroxy-L-erythro-5,6,7,8-tetrahydrobiopterin = (6R)-L-erythro-6,7-dihydrobiopterin + H2O. The protein is Putative pterin-4-alpha-carbinolamine dehydratase of Burkholderia cenocepacia (strain HI2424).